The sequence spans 44 residues: Protein PsbN (44 aa).

Residues 7-29 traverse the membrane as a helical segment; it reads FFTTFLGCLLLSITGYSIYVGFG.

The protein belongs to the PsbN family.

It localises to the plastid. The protein resides in the chloroplast thylakoid membrane. May play a role in photosystem I and II biogenesis. This chain is Protein PsbN, found in Pleurastrum terricola (Filamentous green alga).